Consider the following 517-residue polypeptide: Methylmalonyl-CoA decarboxylase subunit alpha (517 aa).

One can recognise a CoA carboxyltransferase N-terminal domain in the interval 4-260; sequence AAKKIQDLQK…NNMEKAPEFG (257 aa). The CoA carboxyltransferase C-terminal domain maps to 271 to 513; it reads ELDALMPDNP…REKLPAKKHG (243 aa).

The protein belongs to the AccD/PCCB family. The methylmalonyl-CoA decarboxylase is composed of four subunits: the carboxyltransferase alpha subunit (MmdA), the tunnel beta subunit (MmdB), the biotin-containing gamma subunit (MmdC) and the delta subunit (MmdD).

It localises to the cell membrane. The catalysed reaction is (S)-methylmalonyl-CoA + Na(+)(in) + H(+)(out) = propanoyl-CoA + Na(+)(out) + CO2. Carboxyltransferase subunit of the sodium ion pump methylmalonyl-CoA decarboxylase, which converts the chemical energy of a decarboxylation reaction into an electrochemical gradient of Na(+) ions across the cytoplasmic membrane, thereby creating a sodium ion motive force that is used for ATP synthesis. The alpha subunit catalyzes the Na(+)-independent carboxyltransfer from methylmalonyl-CoA to the prosthetic biotin group located on the gamma subunit. This chain is Methylmalonyl-CoA decarboxylase subunit alpha, found in Propionigenium modestum.